Here is a 775-residue protein sequence, read N- to C-terminus: Isopimaradiene synthase (775 aa).

The N-terminal 36 residues, 1-36, are a transit peptide targeting the chloroplast; the sequence is MFSSSLKLKTNPLMDNKIHRSSSDRDFRGSTISSVK. The Mg(2+) site is built by Asp525, Asp529, Asn669, Gln672, and Glu677. The DDXXD motif signature appears at 525 to 529; sequence DDFFD.

This sequence belongs to the terpene synthase family. Mg(2+) is required as a cofactor. Ubiquitous expression in roots, stems, leaves and flowers.

It is found in the plastid. Its subcellular location is the chloroplast. The catalysed reaction is (+)-copalyl diphosphate = isopimara-8(14),15-diene + diphosphate. The protein operates within secondary metabolite biosynthesis; terpenoid biosynthesis. Its function is as follows. Involved in the biosynthesis of ent-kaurene diterpenoids natural products such as oridonin, miltiradiene, eriocalyxin B and nezukol, known to exhibit antitumor, anti-inflammatory and antibacterial activities. Catalyzes the conversion of (+)-copalyl diphosphate ((+)-CPP) to isopimaradiene. In Isodon rubescens (Rabdosia rubescens), this protein is Isopimaradiene synthase.